The primary structure comprises 145 residues: D-aminoacyl-tRNA deacylase (145 aa).

Residues 137 to 138 (GP) carry the Gly-cisPro motif, important for rejection of L-amino acids motif.

Belongs to the DTD family. As to quaternary structure, homodimer.

Its subcellular location is the cytoplasm. It carries out the reaction glycyl-tRNA(Ala) + H2O = tRNA(Ala) + glycine + H(+). The enzyme catalyses a D-aminoacyl-tRNA + H2O = a tRNA + a D-alpha-amino acid + H(+). An aminoacyl-tRNA editing enzyme that deacylates mischarged D-aminoacyl-tRNAs. Also deacylates mischarged glycyl-tRNA(Ala), protecting cells against glycine mischarging by AlaRS. Acts via tRNA-based rather than protein-based catalysis; rejects L-amino acids rather than detecting D-amino acids in the active site. By recycling D-aminoacyl-tRNA to D-amino acids and free tRNA molecules, this enzyme counteracts the toxicity associated with the formation of D-aminoacyl-tRNA entities in vivo and helps enforce protein L-homochirality. The polypeptide is D-aminoacyl-tRNA deacylase (Photobacterium profundum (strain SS9)).